Consider the following 149-residue polypeptide: SsrA-binding protein (149 aa).

Belongs to the SmpB family.

It localises to the cytoplasm. Its function is as follows. Required for rescue of stalled ribosomes mediated by trans-translation. Binds to transfer-messenger RNA (tmRNA), required for stable association of tmRNA with ribosomes. tmRNA and SmpB together mimic tRNA shape, replacing the anticodon stem-loop with SmpB. tmRNA is encoded by the ssrA gene; the 2 termini fold to resemble tRNA(Ala) and it encodes a 'tag peptide', a short internal open reading frame. During trans-translation Ala-aminoacylated tmRNA acts like a tRNA, entering the A-site of stalled ribosomes, displacing the stalled mRNA. The ribosome then switches to translate the ORF on the tmRNA; the nascent peptide is terminated with the 'tag peptide' encoded by the tmRNA and targeted for degradation. The ribosome is freed to recommence translation, which seems to be the essential function of trans-translation. This Thermosipho africanus (strain TCF52B) protein is SsrA-binding protein.